A 331-amino-acid polypeptide reads, in one-letter code: tRNA N6-adenosine threonylcarbamoyltransferase (331 aa).

A divalent metal cation contacts are provided by His-108, His-112, and Tyr-129. Substrate contacts are provided by residues 129-133 (YASGG), Asp-161, Gly-176, Glu-180, and Asn-261. Asp-289 serves as a coordination point for a divalent metal cation.

The protein belongs to the KAE1 / TsaD family. As to quaternary structure, component of the EKC/KEOPS complex composed of at least BUD32, CGI121, GON7, KAE1 and PCC1; the whole complex dimerizes. A divalent metal cation serves as cofactor.

Its subcellular location is the cytoplasm. The protein localises to the nucleus. It carries out the reaction L-threonylcarbamoyladenylate + adenosine(37) in tRNA = N(6)-L-threonylcarbamoyladenosine(37) in tRNA + AMP + H(+). Functionally, component of the EKC/KEOPS complex that is required for the formation of a threonylcarbamoyl group on adenosine at position 37 (t(6)A37) in tRNAs that read codons beginning with adenine. The complex is probably involved in the transfer of the threonylcarbamoyl moiety of threonylcarbamoyl-AMP (TC-AMP) to the N6 group of A37. KAE1 likely plays a direct catalytic role in this reaction, but requires other protein(s) of the complex to fulfill this activity. The EKC/KEOPS complex also promotes both telomere uncapping and telomere elongation. The complex is required for efficient recruitment of transcriptional coactivators. In Encephalitozoon cuniculi (strain GB-M1) (Microsporidian parasite), this protein is tRNA N6-adenosine threonylcarbamoyltransferase.